Consider the following 303-residue polypeptide: Acetylglutamate kinase (303 aa).

Substrate is bound by residues Gly-76–Gly-77, Arg-98, and Asn-192.

This sequence belongs to the acetylglutamate kinase family. ArgB subfamily.

It is found in the cytoplasm. The enzyme catalyses N-acetyl-L-glutamate + ATP = N-acetyl-L-glutamyl 5-phosphate + ADP. It functions in the pathway amino-acid biosynthesis; L-arginine biosynthesis; N(2)-acetyl-L-ornithine from L-glutamate: step 2/4. In terms of biological role, catalyzes the ATP-dependent phosphorylation of N-acetyl-L-glutamate. In Chlorobium phaeobacteroides (strain DSM 266 / SMG 266 / 2430), this protein is Acetylglutamate kinase.